We begin with the raw amino-acid sequence, 239 residues long: Cysteine-rich venom protein ENH1 (239 aa).

The first 18 residues, 1–18 (MIVFILLSLAAVLQQFVA), serve as a signal peptide directing secretion. The SCP domain maps to 37-165 (VDMHNSFRRS…PYNYFYVCQY (129 aa)). 7 disulfide bridges follow: Cys-74–Cys-152, Cys-91–Cys-166, Cys-147–Cys-163, Cys-185–Cys-192, Cys-188–Cys-197, Cys-210–Cys-228, and Cys-219–Cys-232. One can recognise a ShKT domain in the interval 201 to 234 (CPITNTFTNCDSLLQQNSCEDSYIKTNCGASCFC).

Belongs to the CRISP family. In terms of tissue distribution, expressed by the venom gland.

The protein localises to the secreted. Functionally, blocks contraction of smooth muscle elicited by high potassium-induced depolarization, but does not block caffeine-stimulated contraction. May target voltage-gated calcium channels on smooth muscle. In Pseudoferania polylepis (Macleay's water snake), this protein is Cysteine-rich venom protein ENH1.